Here is a 102-residue protein sequence, read N- to C-terminus: Large ribosomal subunit protein bL21 (102 aa).

It belongs to the bacterial ribosomal protein bL21 family. In terms of assembly, part of the 50S ribosomal subunit. Contacts protein L20.

In terms of biological role, this protein binds to 23S rRNA in the presence of protein L20. The protein is Large ribosomal subunit protein bL21 of Bacillus anthracis (strain A0248).